The following is a 563-amino-acid chain: MDYKNLVAERIKENTELEVDLIEKLIEIPPKKEMGDYAFPCFQLAKTFRKAPNLIAEELKEKINKEGFEKVVTVGPYLNFFVDKTILIKDVLEKVLSEKEKYGSSKVGEGKNVVVEYSSPNIAKPFHIGHLFTTAIGNALYKILSFEGYNCIGINHLGDWGTQFGKLISAYRRWVDEEALEKDAIGELLRIYVKFHGEAEKDPELEKEARLNFKRLEEGSEEETELWNRFKDLSLKEFNKVYDMLGIKFDSLAGESFYSDKMDAVVQEIDDKGLLVDSNGAKVVMLDEYNMPPCMIKKSDGATIYATRDLAAAIYRKKTYDFHKCIYVVGTPQALHFKQVFTTLKLMGHDWADDCKHVGFGLVKLANKKLSTRNGDVVFLEDLLNQSVEETLKIINEKNPNLKNKGDVAKKLGIGAVVFTYLKNNRERDIVFDWKEILSFDGETGPYVEYSYARGKSILRKAGELTGEADYSKLSSKEEFELAKLLGGFNDAIMNAIDKLEPAMVTRYVIEVAKAFNKFYNAHGILNAEDNDVKLARVKLVEATCQVIKNALNLLGIDVVEEM.

The 'HIGH' region motif lies at 120 to 130; sequence PNIAKPFHIGH.

This sequence belongs to the class-I aminoacyl-tRNA synthetase family. In terms of assembly, monomer.

It localises to the cytoplasm. It carries out the reaction tRNA(Arg) + L-arginine + ATP = L-arginyl-tRNA(Arg) + AMP + diphosphate. The polypeptide is Arginine--tRNA ligase (Clostridium botulinum (strain ATCC 19397 / Type A)).